Consider the following 162-residue polypeptide: ATP synthase subunit b (162 aa).

The chain crosses the membrane as a helical span at residues 6–28; it reads LVTFVLTIVNILVLFYLLKRFLF.

This sequence belongs to the ATPase B chain family. In terms of assembly, F-type ATPases have 2 components, F(1) - the catalytic core - and F(0) - the membrane proton channel. F(1) has five subunits: alpha(3), beta(3), gamma(1), delta(1), epsilon(1). F(0) has three main subunits: a(1), b(2) and c(10-14). The alpha and beta chains form an alternating ring which encloses part of the gamma chain. F(1) is attached to F(0) by a central stalk formed by the gamma and epsilon chains, while a peripheral stalk is formed by the delta and b chains.

The protein localises to the cell membrane. Functionally, f(1)F(0) ATP synthase produces ATP from ADP in the presence of a proton or sodium gradient. F-type ATPases consist of two structural domains, F(1) containing the extramembraneous catalytic core and F(0) containing the membrane proton channel, linked together by a central stalk and a peripheral stalk. During catalysis, ATP synthesis in the catalytic domain of F(1) is coupled via a rotary mechanism of the central stalk subunits to proton translocation. In terms of biological role, component of the F(0) channel, it forms part of the peripheral stalk, linking F(1) to F(0). The sequence is that of ATP synthase subunit b from Natranaerobius thermophilus (strain ATCC BAA-1301 / DSM 18059 / JW/NM-WN-LF).